A 100-amino-acid chain; its full sequence is Co-chaperonin GroES (100 aa).

This sequence belongs to the GroES chaperonin family. In terms of assembly, heptamer of 7 subunits arranged in a ring. Interacts with the chaperonin GroEL.

It localises to the cytoplasm. Together with the chaperonin GroEL, plays an essential role in assisting protein folding. The GroEL-GroES system forms a nano-cage that allows encapsulation of the non-native substrate proteins and provides a physical environment optimized to promote and accelerate protein folding. GroES binds to the apical surface of the GroEL ring, thereby capping the opening of the GroEL channel. In Mycolicibacterium vanbaalenii (strain DSM 7251 / JCM 13017 / BCRC 16820 / KCTC 9966 / NRRL B-24157 / PYR-1) (Mycobacterium vanbaalenii), this protein is Co-chaperonin GroES.